Consider the following 100-residue polypeptide: Small ribosomal subunit protein uS14 (100 aa).

It belongs to the universal ribosomal protein uS14 family. As to quaternary structure, part of the 30S ribosomal subunit. Contacts proteins S3 and S10.

In terms of biological role, binds 16S rRNA, required for the assembly of 30S particles and may also be responsible for determining the conformation of the 16S rRNA at the A site. The protein is Small ribosomal subunit protein uS14 of Gloeothece citriformis (strain PCC 7424) (Cyanothece sp. (strain PCC 7424)).